The primary structure comprises 878 residues: Alanine--tRNA ligase (878 aa).

Residues His-566, His-570, Cys-668, and His-672 each coordinate Zn(2+).

Belongs to the class-II aminoacyl-tRNA synthetase family. Zn(2+) is required as a cofactor.

The protein resides in the cytoplasm. It carries out the reaction tRNA(Ala) + L-alanine + ATP = L-alanyl-tRNA(Ala) + AMP + diphosphate. Catalyzes the attachment of alanine to tRNA(Ala) in a two-step reaction: alanine is first activated by ATP to form Ala-AMP and then transferred to the acceptor end of tRNA(Ala). Also edits incorrectly charged Ser-tRNA(Ala) and Gly-tRNA(Ala) via its editing domain. The protein is Alanine--tRNA ligase of Bacillus subtilis (strain 168).